The chain runs to 256 residues: Imidazole glycerol phosphate synthase subunit HisF (256 aa).

Active-site residues include Asp-12 and Asp-131.

It belongs to the HisA/HisF family. As to quaternary structure, heterodimer of HisH and HisF.

The protein resides in the cytoplasm. It carries out the reaction 5-[(5-phospho-1-deoxy-D-ribulos-1-ylimino)methylamino]-1-(5-phospho-beta-D-ribosyl)imidazole-4-carboxamide + L-glutamine = D-erythro-1-(imidazol-4-yl)glycerol 3-phosphate + 5-amino-1-(5-phospho-beta-D-ribosyl)imidazole-4-carboxamide + L-glutamate + H(+). Its pathway is amino-acid biosynthesis; L-histidine biosynthesis; L-histidine from 5-phospho-alpha-D-ribose 1-diphosphate: step 5/9. In terms of biological role, IGPS catalyzes the conversion of PRFAR and glutamine to IGP, AICAR and glutamate. The HisF subunit catalyzes the cyclization activity that produces IGP and AICAR from PRFAR using the ammonia provided by the HisH subunit. This chain is Imidazole glycerol phosphate synthase subunit HisF, found in Pseudomonas fluorescens (strain SBW25).